We begin with the raw amino-acid sequence, 441 residues long: Peroxisomal multifunctional enzyme A (441 aa).

The interval 1-302 is 3-hydroxyacyl-CoA dehydrogenase; the sequence is MALNFKDKVV…VNSKPADGES (302 aa). NAD(+) contacts are provided by residues 11 to 35, isoleucine 19, aspartate 38, 73 to 74, and asparagine 97; these read IVTG…AKVV and SV. Residue serine 149 participates in substrate binding. Catalysis depends on tyrosine 162, which acts as the Proton acceptor. Residues 162–166 and 194–197 each bind NAD(+); these read YGSMK and AASR. One can recognise an SCP2 domain in the interval 331-440; sequence ASKIFTTIQG…KLGALMQGSK (110 aa). Position 412 (glutamine 412) interacts with substrate.

The protein belongs to the short-chain dehydrogenases/reductases (SDR) family.

It localises to the peroxisome. The enzyme catalyses a (3S)-3-hydroxyacyl-CoA + NAD(+) = a 3-oxoacyl-CoA + NADH + H(+). It functions in the pathway lipid metabolism; fatty acid beta-oxidation. Functionally, enzyme acting on the peroxisomal beta-oxidation pathway for fatty acids. Protects the cells from the increase of the harmful xenobiotic fatty acids incorporated from their diets and optimizes cellular lipid composition for proper development. The chain is Peroxisomal multifunctional enzyme A (mfeA) from Dictyostelium discoideum (Social amoeba).